We begin with the raw amino-acid sequence, 497 residues long: Putative aldehyde dehydrogenase AldA (497 aa).

213-219 (GKGSESG) lines the NAD(+) pocket. Active-site residues include glutamate 257 and cysteine 291.

This sequence belongs to the aldehyde dehydrogenase family.

The enzyme catalyses an aldehyde + NAD(+) + H2O = a carboxylate + NADH + 2 H(+). The protein is Putative aldehyde dehydrogenase AldA (aldA) of Staphylococcus epidermidis (strain ATCC 35984 / DSM 28319 / BCRC 17069 / CCUG 31568 / BM 3577 / RP62A).